The following is a 576-amino-acid chain: Homeobox protein invected (576 aa).

5 disordered regions span residues 1–68 (MSTL…DEQT), 80–102 (EVEE…NSVL), 305–344 (GGSV…LAQS), 364–410 (NSND…GEDS), and 426–476 (SDRP…RPRT). A compositionally biased stretch (acidic residues) spans 80-91 (EVEEEHDLDLED). 3 stretches are compositionally biased toward low complexity: residues 309-325 (SGSS…TNGN), 364-381 (NSND…TNTS), and 395-405 (AGAGATGASGK). The span at 450-468 (AGGGGGGVEKGEAADGGGV) shows a compositional bias: gly residues. Positions 471–530 (DKRPRTAFSGTQLARLKHEFNENRYLTEKRRQQLSGELGLNEAQIKIWFQNKRAKLKKSS) form a DNA-binding region, homeobox.

This sequence belongs to the engrailed homeobox family. In terms of tissue distribution, expressed in row 6/7 of the embryonic neuroectoderm.

It localises to the nucleus. Functionally, engrailed (en) and invected (inv) are functionally redundant transcription factors in neuronal precursor cell NB5-3 specification. Inv is unable to substitute for en in other regulatory processes such as maintaining gsb expression in the neuroectoderm after stage 10 of embryogenesis. Maintenance of gsb expression in row 5 of the neuroectoderm involves an as yet unidentified short range signaling molecule. In Drosophila melanogaster (Fruit fly), this protein is Homeobox protein invected (inv).